The sequence spans 122 residues: Large ribosomal subunit protein uL14 (122 aa).

The protein belongs to the universal ribosomal protein uL14 family. Part of the 50S ribosomal subunit. Forms a cluster with proteins L3 and L19. In the 70S ribosome, L14 and L19 interact and together make contacts with the 16S rRNA in bridges B5 and B8.

Its function is as follows. Binds to 23S rRNA. Forms part of two intersubunit bridges in the 70S ribosome. The sequence is that of Large ribosomal subunit protein uL14 from Desulfotalea psychrophila (strain LSv54 / DSM 12343).